Consider the following 99-residue polypeptide: Malonate decarboxylase acyl carrier protein (99 aa).

S25 carries the O-(phosphoribosyl dephospho-coenzyme A)serine modification.

Belongs to the MdcC family. In terms of processing, covalently binds the prosthetic group of malonate decarboxylase.

The protein localises to the cytoplasm. Its function is as follows. Subunit of malonate decarboxylase, it is an acyl carrier protein to which acetyl and malonyl thioester residues are bound via a 2'-(5''-phosphoribosyl)-3'-dephospho-CoA prosthetic group and turn over during the catalytic mechanism. The polypeptide is Malonate decarboxylase acyl carrier protein (Pseudomonas fluorescens (strain Pf0-1)).